A 108-amino-acid chain; its full sequence is UPF0060 membrane protein Nwi_1459 (108 aa).

Transmembrane regions (helical) follow at residues 5-25, 31-51, 61-81, and 88-108; these read AAYVGAAIAEIAGCFAFWAWL, VWWLVPGMASLALFAYLLTLV, AAYGGIYIMASLGWLWSVEGI, and LAGALICLIGAVVILIGPHEI.

The protein belongs to the UPF0060 family.

Its subcellular location is the cell inner membrane. The protein is UPF0060 membrane protein Nwi_1459 of Nitrobacter winogradskyi (strain ATCC 25391 / DSM 10237 / CIP 104748 / NCIMB 11846 / Nb-255).